The primary structure comprises 163 residues: 3-isopropylmalate dehydratase small subunit (163 aa).

The protein belongs to the LeuD family. LeuD type 2 subfamily. In terms of assembly, heterodimer of LeuC and LeuD.

It carries out the reaction (2R,3S)-3-isopropylmalate = (2S)-2-isopropylmalate. The protein operates within amino-acid biosynthesis; L-leucine biosynthesis; L-leucine from 3-methyl-2-oxobutanoate: step 2/4. Functionally, catalyzes the isomerization between 2-isopropylmalate and 3-isopropylmalate, via the formation of 2-isopropylmaleate. The polypeptide is 3-isopropylmalate dehydratase small subunit (Clostridioides difficile (strain 630) (Peptoclostridium difficile)).